Here is a 139-residue protein sequence, read N- to C-terminus: Holo-[acyl-carrier-protein] synthase (139 aa).

Mg(2+)-binding residues include aspartate 8 and glutamate 61.

The protein belongs to the P-Pant transferase superfamily. AcpS family. Mg(2+) serves as cofactor.

The protein localises to the cytoplasm. The catalysed reaction is apo-[ACP] + CoA = holo-[ACP] + adenosine 3',5'-bisphosphate + H(+). Functionally, transfers the 4'-phosphopantetheine moiety from coenzyme A to a Ser of acyl-carrier-protein. The polypeptide is Holo-[acyl-carrier-protein] synthase (Bradyrhizobium diazoefficiens (strain JCM 10833 / BCRC 13528 / IAM 13628 / NBRC 14792 / USDA 110)).